The following is a 182-amino-acid chain: UPF0316 protein BCQ_3166 (182 aa).

3 helical membrane-spanning segments follow: residues 6 to 26, 32 to 52, and 58 to 78; these read LIFV…ILLV, SAAA…GIVF, and WMNI…GGYI.

This sequence belongs to the UPF0316 family.

The protein resides in the cell membrane. The sequence is that of UPF0316 protein BCQ_3166 from Bacillus cereus (strain Q1).